The primary structure comprises 123 residues: Small ribosomal subunit protein uS12 (123 aa).

Asp-89 carries the 3-methylthioaspartic acid modification.

The protein belongs to the universal ribosomal protein uS12 family. As to quaternary structure, part of the 30S ribosomal subunit. Contacts proteins S8 and S17. May interact with IF1 in the 30S initiation complex.

With S4 and S5 plays an important role in translational accuracy. Its function is as follows. Interacts with and stabilizes bases of the 16S rRNA that are involved in tRNA selection in the A site and with the mRNA backbone. Located at the interface of the 30S and 50S subunits, it traverses the body of the 30S subunit contacting proteins on the other side and probably holding the rRNA structure together. The combined cluster of proteins S8, S12 and S17 appears to hold together the shoulder and platform of the 30S subunit. The chain is Small ribosomal subunit protein uS12 from Methylorubrum extorquens (strain PA1) (Methylobacterium extorquens).